Consider the following 163-residue polypeptide: Nucleotide-binding protein HSM_1099 (163 aa).

Belongs to the YajQ family.

In terms of biological role, nucleotide-binding protein. The polypeptide is Nucleotide-binding protein HSM_1099 (Histophilus somni (strain 2336) (Haemophilus somnus)).